Here is a 370-residue protein sequence, read N- to C-terminus: Chloromuconate cycloisomerase (370 aa).

The active-site Proton acceptor is the Lys-165. Positions 194, 220, and 245 each coordinate Mn(2+). The active-site Proton donor is the Glu-323.

Belongs to the mandelate racemase/muconate lactonizing enzyme family. Mn(2+) is required as a cofactor.

It catalyses the reaction 2-[(2R)-2-chloro-2,5-dihydro-5-oxofuryl]acetate = 3-chloro-cis,cis-muconate + H(+). Its pathway is aromatic compound metabolism; 3-chlorocatechol degradation. The polypeptide is Chloromuconate cycloisomerase (tfdDI) (Cupriavidus pinatubonensis (strain JMP 134 / LMG 1197) (Cupriavidus necator (strain JMP 134))).